The sequence spans 382 residues: Lipid-A-disaccharide synthase (382 aa).

Belongs to the LpxB family.

It catalyses the reaction 2-N,3-O-bis[(3R)-3-hydroxytetradecanoyl]-alpha-D-glucosaminyl 1-phosphate + UDP-2-N,3-O-bis[(3R)-3-hydroxytetradecanoyl]-alpha-D-glucosamine = lipid A disaccharide (E. coli) + UDP + H(+). The catalysed reaction is a lipid X + a UDP-2-N,3-O-bis[(3R)-3-hydroxyacyl]-alpha-D-glucosamine = a lipid A disaccharide + UDP + H(+). The protein operates within glycolipid biosynthesis; lipid IV(A) biosynthesis; lipid IV(A) from (3R)-3-hydroxytetradecanoyl-[acyl-carrier-protein] and UDP-N-acetyl-alpha-D-glucosamine: step 5/6. Its function is as follows. Condensation of UDP-2,3-diacylglucosamine and 2,3-diacylglucosamine-1-phosphate to form lipid A disaccharide, a precursor of lipid A, a phosphorylated glycolipid that anchors the lipopolysaccharide to the outer membrane of the cell. In Escherichia coli (strain K12 / MC4100 / BW2952), this protein is Lipid-A-disaccharide synthase.